The chain runs to 191 residues: Cell division protein SepF (191 aa).

Low complexity predominate over residues 151–165; it reads SSSPEEASPSSVPTE. A disordered region spans residues 151–191; the sequence is SSSPEEASPSSVPTENTPQYSLGKNTTPEPAWGNSKLSAYS. Residues 166-178 show a composition bias toward polar residues; the sequence is NTPQYSLGKNTTP.

This sequence belongs to the SepF family. Homodimer. Interacts with FtsZ.

The protein localises to the cytoplasm. In terms of biological role, cell division protein that is part of the divisome complex and is recruited early to the Z-ring. Probably stimulates Z-ring formation, perhaps through the cross-linking of FtsZ protofilaments. Its function overlaps with FtsA. The protein is Cell division protein SepF of Prochlorococcus marinus (strain MIT 9215).